Here is a 359-residue protein sequence, read N- to C-terminus: sn-1 linoleoyl-lipid 6-desaturase (359 aa).

Helical transmembrane passes span 45–65 and 69–89; these read LIIV…PVIF and LLGC…VGHD. Positions 88–92 match the Histidine box-1 motif; it reads HDANH. Positions 123 to 128 match the Histidine box-2 motif; sequence HNYLHH. The next 3 helical transmembrane spans lie at 165-185, 206-226, and 231-251; these read IWGL…YLVL, LLGI…ALGF, and VLIG…TIFM. The short motif at 306-310 is the Histidine box-3 element; it reads HHLFP.

Belongs to the fatty acid desaturase type 2 family. The cofactor is Fe(2+).

It is found in the membrane. The catalysed reaction is a 1-[(9Z,12Z)-octadecdienoyl]-2-acyl-glycerolipid + 2 reduced [2Fe-2S]-[ferredoxin] + O2 + 2 H(+) = a 1-[(6Z,9Z,12Z)-octadectrienoyl]-2-acyl-glycerolipid + 2 oxidized [2Fe-2S]-[ferredoxin] + 2 H2O. It participates in lipid metabolism; polyunsaturated fatty acid biosynthesis. In terms of biological role, desaturase involved in fatty acid biosynthesis. Introduces a double bond at carbon 6 of linoleoyl group (18:2) attached to the sn-1 position of the glycerol moiety of membrane glycerolipids, leading to the formation of gamma-linolenic acid (GLA). In Synechocystis sp. (strain ATCC 27184 / PCC 6803 / Kazusa), this protein is sn-1 linoleoyl-lipid 6-desaturase.